Reading from the N-terminus, the 630-residue chain is Auxin efflux carrier component 2 (630 aa).

At 1 to 6 (MITGRD) the chain is on the extracellular side. A helical transmembrane segment spans residues 7–27 (IYDVLAAIVPLYVAMFLAYGS). Topologically, residues 28-38 (VRWWGIFTPDQ) are cytoplasmic. Residues 39-59 (CSGINRFVAVFAVPLLSFHFI) form a helical membrane-spanning segment. A (indol-3-yl)acetate-binding site is contributed by Val51. Topologically, residues 60 to 70 (STNDPYSMNYR) are extracellular. The helical transmembrane segment at 71-91 (FLAADSLQKLVILAALAVWHN) threads the bilayer. The Cytoplasmic portion of the chain corresponds to 92 to 108 (LLSRYRRNGGAAASLDW). Residues 109-129 (TITLFSLSTLPNTLVMGIPLL) form a helical membrane-spanning segment. (indol-3-yl)acetate-binding residues include Asn120 and Leu122. Residues 130-139 (RAMYGDFSGS) lie on the Extracellular side of the membrane. Residues 140–160 (LMVQIVVLQSVIWYTLMLFLF) traverse the membrane as a helical segment. Tyr153 contributes to the (indol-3-yl)acetate binding site. Topologically, residues 161–490 (EYRGAKALIS…LIRNPNTYSS (330 aa)) are cytoplasmic. Residues 317–350 (ASGKAADPPSYPAPNPGMMPAPRKKELGGSNSNS) are disordered. Pro residues predominate over residues 325 to 335 (PSYPAPNPGMM). A helical transmembrane segment spans residues 491–511 (LIGLVWSLVSFRWNIQMPSII). Residues 512–514 (KGS) are Extracellular-facing. The chain crosses the membrane as a helical span at residues 515 to 535 (ISILSDAGLGMAMFSLGLFMA). At 536–549 (LQPKIISCGKTVAT) the chain is on the cytoplasmic side. A helical membrane pass occupies residues 550-570 (FAMAVRFLTGPAVIAATSIAI). At 571–574 (GLRG) the chain is on the extracellular side. Residues 575–595 (VLLHVAIVQAALPQGIVPFVF) form a helical membrane-spanning segment. Residues Ile590 and Val591 each contribute to the (indol-3-yl)acetate site. Residues 596-609 (AKEYNCHPQILSTA) are Cytoplasmic-facing. A helical transmembrane segment spans residues 610–630 (VIFGMLIALPITILYYVLLGI).

This sequence belongs to the auxin efflux carrier (TC 2.A.69.1) family. Homodimer. In terms of tissue distribution, expressed in roots, leaves, shoot apex and panicles. Expressed in roots, stem bases and young panicles.

The protein resides in the membrane. Functionally, acts as a component of the auxin efflux carrier. Involved in the basipetal polar auxin transport which contributes to the spreading growth of the tillers. The chain is Auxin efflux carrier component 2 from Oryza sativa subsp. japonica (Rice).